We begin with the raw amino-acid sequence, 463 residues long: Putative protein FAM90A2P (463 aa).

Disordered stretches follow at residues 1 to 42 (MTAR…DPRL), 67 to 115 (ALVP…PQRK), 150 to 295 (MPVH…PAQA), and 326 to 365 (ALENLQPPPAATELGPSTSPQMGRRTPAQVPGVDRQPPHS). Basic and acidic residues-rich tracts occupy residues 74-83 (GKKEGKENLK), 97-114 (NKDKGEKEERPRQQDPQR), and 159-170 (PCVDPELADRSA). Residues 180 to 198 (LASLSPLRKASLRSSSSLG) are compositionally biased toward low complexity.

Belongs to the FAM90 family.

This chain is Putative protein FAM90A2P (FAM90A2P), found in Homo sapiens (Human).